We begin with the raw amino-acid sequence, 172 residues long: Small ribosomal subunit protein uS5 (172 aa).

The 64-residue stretch at 17-80 (LKEKMIQVNR…DAARRDMVKV (64 aa)) folds into the S5 DRBM domain.

Belongs to the universal ribosomal protein uS5 family. Part of the 30S ribosomal subunit. Contacts proteins S4 and S8.

In terms of biological role, with S4 and S12 plays an important role in translational accuracy. Located at the back of the 30S subunit body where it stabilizes the conformation of the head with respect to the body. The polypeptide is Small ribosomal subunit protein uS5 (Methylibium petroleiphilum (strain ATCC BAA-1232 / LMG 22953 / PM1)).